The sequence spans 396 residues: Tryptophan synthase beta chain (396 aa).

Lys86 carries the N6-(pyridoxal phosphate)lysine modification.

The protein belongs to the TrpB family. Tetramer of two alpha and two beta chains. Pyridoxal 5'-phosphate is required as a cofactor.

It catalyses the reaction (1S,2R)-1-C-(indol-3-yl)glycerol 3-phosphate + L-serine = D-glyceraldehyde 3-phosphate + L-tryptophan + H2O. It functions in the pathway amino-acid biosynthesis; L-tryptophan biosynthesis; L-tryptophan from chorismate: step 5/5. The beta subunit is responsible for the synthesis of L-tryptophan from indole and L-serine. This chain is Tryptophan synthase beta chain, found in Francisella tularensis subsp. tularensis (strain FSC 198).